The following is a 502-amino-acid chain: Lysine--tRNA ligase (502 aa).

Positions 411 and 418 each coordinate Mg(2+).

It belongs to the class-II aminoacyl-tRNA synthetase family. Homodimer. It depends on Mg(2+) as a cofactor.

The protein resides in the cytoplasm. It catalyses the reaction tRNA(Lys) + L-lysine + ATP = L-lysyl-tRNA(Lys) + AMP + diphosphate. This is Lysine--tRNA ligase from Clostridium kluyveri (strain ATCC 8527 / DSM 555 / NBRC 12016 / NCIMB 10680 / K1).